The following is a 93-amino-acid chain: MITIKDVEHISWLASIRVSEEEREELVAQFNTILDYFQQLDEVDTEGVEPTYRVVDLANVFREDVPRDSLTQDEALRNAPRREEGYFRSPRIV.

Belongs to the GatC family. In terms of assembly, heterotrimer of A, B and C subunits.

The catalysed reaction is L-glutamyl-tRNA(Gln) + L-glutamine + ATP + H2O = L-glutaminyl-tRNA(Gln) + L-glutamate + ADP + phosphate + H(+). It carries out the reaction L-aspartyl-tRNA(Asn) + L-glutamine + ATP + H2O = L-asparaginyl-tRNA(Asn) + L-glutamate + ADP + phosphate + 2 H(+). Its function is as follows. Allows the formation of correctly charged Asn-tRNA(Asn) or Gln-tRNA(Gln) through the transamidation of misacylated Asp-tRNA(Asn) or Glu-tRNA(Gln) in organisms which lack either or both of asparaginyl-tRNA or glutaminyl-tRNA synthetases. The reaction takes place in the presence of glutamine and ATP through an activated phospho-Asp-tRNA(Asn) or phospho-Glu-tRNA(Gln). This Methanothrix thermoacetophila (strain DSM 6194 / JCM 14653 / NBRC 101360 / PT) (Methanosaeta thermophila) protein is Aspartyl/glutamyl-tRNA(Asn/Gln) amidotransferase subunit C.